Here is a 307-residue protein sequence, read N- to C-terminus: N-acetylmuramic acid 6-phosphate etherase (307 aa).

Residues 59-222 (TADRLRQGGR…STGVMVKLGK (164 aa)) form the SIS domain. E87 acts as the Proton donor in catalysis. E118 is an active-site residue.

Belongs to the GCKR-like family. MurNAc-6-P etherase subfamily. Homodimer.

It carries out the reaction N-acetyl-D-muramate 6-phosphate + H2O = N-acetyl-D-glucosamine 6-phosphate + (R)-lactate. It participates in amino-sugar metabolism; N-acetylmuramate degradation. Functionally, specifically catalyzes the cleavage of the D-lactyl ether substituent of MurNAc 6-phosphate, producing GlcNAc 6-phosphate and D-lactate. This is N-acetylmuramic acid 6-phosphate etherase from Nostoc sp. (strain PCC 7120 / SAG 25.82 / UTEX 2576).